Reading from the N-terminus, the 466-residue chain is Glycine--tRNA ligase (466 aa).

Substrate is bound by residues arginine 105 and glutamate 168. ATP contacts are provided by residues 200–202 (RNE), 210–215 (FRTREF), 287–288 (EL), and 331–334 (GLTR). 215 to 219 (FEQME) contacts substrate. 327–331 (EPAAG) lines the substrate pocket.

It belongs to the class-II aminoacyl-tRNA synthetase family. As to quaternary structure, homodimer.

The protein resides in the cytoplasm. It catalyses the reaction tRNA(Gly) + glycine + ATP = glycyl-tRNA(Gly) + AMP + diphosphate. Catalyzes the attachment of glycine to tRNA(Gly). The polypeptide is Glycine--tRNA ligase (Nocardia farcinica (strain IFM 10152)).